The following is a 264-amino-acid chain: S-adenosylmethionine decarboxylase proenzyme (264 aa).

The Schiff-base intermediate with substrate; via pyruvic acid role is filled by Ser112. The residue at position 112 (Ser112) is a Pyruvic acid (Ser); by autocatalysis. His117 serves as the catalytic Proton acceptor; for processing activity. Cys140 (proton donor; for catalytic activity) is an active-site residue.

Belongs to the prokaryotic AdoMetDC family. Type 2 subfamily. Heterooctamer of four alpha and four beta chains arranged as a tetramer of alpha/beta heterodimers. It depends on pyruvate as a cofactor. In terms of processing, is synthesized initially as an inactive proenzyme. Formation of the active enzyme involves a self-maturation process in which the active site pyruvoyl group is generated from an internal serine residue via an autocatalytic post-translational modification. Two non-identical subunits are generated from the proenzyme in this reaction, and the pyruvate is formed at the N-terminus of the alpha chain, which is derived from the carboxyl end of the proenzyme. The post-translation cleavage follows an unusual pathway, termed non-hydrolytic serinolysis, in which the side chain hydroxyl group of the serine supplies its oxygen atom to form the C-terminus of the beta chain, while the remainder of the serine residue undergoes an oxidative deamination to produce ammonia and the pyruvoyl group blocking the N-terminus of the alpha chain.

It carries out the reaction S-adenosyl-L-methionine + H(+) = S-adenosyl 3-(methylsulfanyl)propylamine + CO2. The protein operates within amine and polyamine biosynthesis; S-adenosylmethioninamine biosynthesis; S-adenosylmethioninamine from S-adenosyl-L-methionine: step 1/1. Catalyzes the decarboxylation of S-adenosylmethionine to S-adenosylmethioninamine (dcAdoMet), the propylamine donor required for the synthesis of the polyamines spermine and spermidine from the diamine putrescine. In Enterobacter sp. (strain 638), this protein is S-adenosylmethionine decarboxylase proenzyme.